Here is a 682-residue protein sequence, read N- to C-terminus: Potassium-transporting ATPase ATP-binding subunit (682 aa).

Helical transmembrane passes span 34-54 (PVMFVVWAGSVLTTLLTLAMV), 58-78 (IAGSALFTGIISLWLWFTVLF), 219-239 (IALTILLIALTIVFLLATATL), and 254-274 (VLVALLVCLIPTTIGGLLSAI). The active-site 4-aspartylphosphate intermediate is the Asp307. ATP-binding positions include Asp344, Glu348, 377 to 384 (FTAQSRMS), and Lys395. Residues Asp518 and Asp522 each coordinate Mg(2+). 3 helical membrane-spanning segments follow: residues 588–608 (FAIIPAAFAATYPQLNALNVM), 616–636 (AILSAVIFNALIIIFLIPLAL), and 662–682 (LVVPFIGIKVIDVLLTLLGLA).

It belongs to the cation transport ATPase (P-type) (TC 3.A.3) family. Type IA subfamily. In terms of assembly, the system is composed of three essential subunits: KdpA, KdpB and KdpC.

It is found in the cell inner membrane. It carries out the reaction K(+)(out) + ATP + H2O = K(+)(in) + ADP + phosphate + H(+). Part of the high-affinity ATP-driven potassium transport (or Kdp) system, which catalyzes the hydrolysis of ATP coupled with the electrogenic transport of potassium into the cytoplasm. This subunit is responsible for energy coupling to the transport system and for the release of the potassium ions to the cytoplasm. This chain is Potassium-transporting ATPase ATP-binding subunit, found in Salmonella newport (strain SL254).